Reading from the N-terminus, the 321-residue chain is NADH-ubiquinone oxidoreductase chain 1 (321 aa).

Transmembrane regions (helical) follow at residues 5-25 (LVTL…AFLT), 74-94 (LLIL…APIP), 104-124 (LGLL…LWAG), 151-171 (GIIL…LLTI), 175-195 (YTWL…STLA), 227-247 (FFLA…ILFI), 256-276 (ELFL…FLWI), and 296-316 (FLPM…SISG).

This sequence belongs to the complex I subunit 1 family.

Its subcellular location is the mitochondrion inner membrane. It carries out the reaction a ubiquinone + NADH + 5 H(+)(in) = a ubiquinol + NAD(+) + 4 H(+)(out). Its function is as follows. Core subunit of the mitochondrial membrane respiratory chain NADH dehydrogenase (Complex I) that is believed to belong to the minimal assembly required for catalysis. Complex I functions in the transfer of electrons from NADH to the respiratory chain. The immediate electron acceptor for the enzyme is believed to be ubiquinone. The protein is NADH-ubiquinone oxidoreductase chain 1 (MT-ND1) of Varanus baritji (Black-spotted ridge-tailed monitor).